The following is a 114-amino-acid chain: MGFRFPVKTKLPPGFINARVLKDSFKRQQAADHEVTVTALKYIARNTALPTRARMEAQLQLAVMPNYTRMTQVRNRCIATGHARSVITDFRLCRTQFREKAKNGELPGVKKGVW.

The protein belongs to the universal ribosomal protein uS14 family.

The protein resides in the mitochondrion. The protein is Small ribosomal subunit protein uS14m (MRP2) of Eremothecium gossypii (strain ATCC 10895 / CBS 109.51 / FGSC 9923 / NRRL Y-1056) (Yeast).